Reading from the N-terminus, the 655-residue chain is MGKIKELQTSLANKIAAGEVVERPGSVVKELLENAIDAQATEINIEVEQSGVASIRVVDNGTGIHIDDLGLVFHRHATSKLDADDDLFHIRTLGFRGEALASISSVAKVTLSTCTDNEEGQQIYVENGEILDQKPAKAKRGTDILVESLFYNTPARLKYIKSLYTELGKITDIVNRMAMSHPDIRISLISDGKTIMKTNGSGRTNEVMSEIYGMKVAKDLVHISGDTSDYHLEGFVAKPEHSRSNKHYISIFINGRYIKNFLLNKAILEGYHTLLMIGRYPICYINIEMDPILVDVNVHPTKLEVRLSKEDQLFNLIVEKIREAFKDRILIPQNDMDKITKKNKVLDQFEQQKLDFEKKQQQENHSQPVNSHEEDEKNDDKAYHSSQTHYEPTDYILKEENNTSVSTSPNSDDDYTQTQKSVLYDLENENQSEFINEADFDSDISNHSDSDIKGSVSKDPSRRVPYMEVVGQVHGTYIIAQNENGMYMIDQHAAQERIKYEYFREKIGEVTNEIQNLLIPLTFHFSTDELMIINQHKEELDKVGVHLEPFGGNDYIVDSYPVWFPTAEAEEIIKDMIEYVLEHKKVNVKKIREDAAIMMSCKKSIKANHYLKNNEMADLVNQLRETEDPFTCPHGRPIIINFSNYELERLFKRTI.

2 disordered regions span residues 357–416 (EKKQ…DDYT) and 439–460 (DFDS…SKDP). Over residues 371–383 (SHEEDEKNDDKAY) the composition is skewed to basic and acidic residues. Residues 402–416 (NTSVSTSPNSDDDYT) show a composition bias toward polar residues.

It belongs to the DNA mismatch repair MutL/HexB family.

Its function is as follows. This protein is involved in the repair of mismatches in DNA. It is required for dam-dependent methyl-directed DNA mismatch repair. May act as a 'molecular matchmaker', a protein that promotes the formation of a stable complex between two or more DNA-binding proteins in an ATP-dependent manner without itself being part of a final effector complex. The polypeptide is DNA mismatch repair protein MutL (Staphylococcus saprophyticus subsp. saprophyticus (strain ATCC 15305 / DSM 20229 / NCIMB 8711 / NCTC 7292 / S-41)).